The primary structure comprises 732 residues: Catalase-peroxidase (732 aa).

The disordered stretch occupies residues 1–26; that stretch reads MADNKKSPETGGITMQIPGKGRTNRD. The segment at residues 96–219 is a cross-link (tryptophyl-tyrosyl-methioninium (Trp-Tyr) (with M-245)); that stretch reads WHSAGTYRTF…LAAVQMGLIY (124 aa). The active-site Proton acceptor is the histidine 97. The tryptophyl-tyrosyl-methioninium (Tyr-Met) (with W-96) cross-link spans 219 to 245; sequence YVNPEGPDGNPDPVAAARDIREVFARM. Histidine 260 is a heme b binding site. Positions 344–365 are disordered; sequence KPKGEAGAGTVPDPHDPKKRHA.

Belongs to the peroxidase family. Peroxidase/catalase subfamily. Homodimer or homotetramer. The cofactor is heme b. In terms of processing, formation of the three residue Trp-Tyr-Met cross-link is important for the catalase, but not the peroxidase activity of the enzyme.

It carries out the reaction H2O2 + AH2 = A + 2 H2O. It catalyses the reaction 2 H2O2 = O2 + 2 H2O. In terms of biological role, bifunctional enzyme with both catalase and broad-spectrum peroxidase activity. In Methanospirillum hungatei JF-1 (strain ATCC 27890 / DSM 864 / NBRC 100397 / JF-1), this protein is Catalase-peroxidase.